A 173-amino-acid polypeptide reads, in one-letter code: Ribosome maturation factor RimM (173 aa).

A PRC barrel domain is found at 95–169 (PDEFYDHELE…TIVIDPPEGL (75 aa)).

This sequence belongs to the RimM family. Binds ribosomal protein uS19.

The protein resides in the cytoplasm. An accessory protein needed during the final step in the assembly of 30S ribosomal subunit, possibly for assembly of the head region. Essential for efficient processing of 16S rRNA. May be needed both before and after RbfA during the maturation of 16S rRNA. It has affinity for free ribosomal 30S subunits but not for 70S ribosomes. The polypeptide is Ribosome maturation factor RimM (Mycolicibacterium smegmatis (strain ATCC 700084 / mc(2)155) (Mycobacterium smegmatis)).